The sequence spans 601 residues: Aspartate--tRNA(Asp/Asn) ligase (601 aa).

Glutamate 173 contributes to the L-aspartate binding site. Residues 197-200 (QLFK) form an aspartate region. An L-aspartate-binding site is contributed by arginine 219. ATP contacts are provided by residues 219–221 (RDE) and glutamine 228. Histidine 456 provides a ligand contact to L-aspartate. An ATP-binding site is contributed by glutamate 490. Residue arginine 497 coordinates L-aspartate. An ATP-binding site is contributed by 542–545 (GWDR). Residues 566 to 601 (GGGYDPLTQAPAPITAEQRRESGVDAVPDDETAPQA) form a disordered region. Residues 592-601 (VPDDETAPQA) show a composition bias toward acidic residues.

It belongs to the class-II aminoacyl-tRNA synthetase family. Type 1 subfamily. In terms of assembly, homodimer.

It is found in the cytoplasm. The enzyme catalyses tRNA(Asx) + L-aspartate + ATP = L-aspartyl-tRNA(Asx) + AMP + diphosphate. Its function is as follows. Aspartyl-tRNA synthetase with relaxed tRNA specificity since it is able to aspartylate not only its cognate tRNA(Asp) but also tRNA(Asn). Reaction proceeds in two steps: L-aspartate is first activated by ATP to form Asp-AMP and then transferred to the acceptor end of tRNA(Asp/Asn). The polypeptide is Aspartate--tRNA(Asp/Asn) ligase (Beutenbergia cavernae (strain ATCC BAA-8 / DSM 12333 / CCUG 43141 / JCM 11478 / NBRC 16432 / NCIMB 13614 / HKI 0122)).